Consider the following 463-residue polypeptide: ATP-dependent protease ATPase subunit HslU (463 aa).

ATP contacts are provided by residues Ile19, 61 to 66 (GVGKTE), Asp277, Glu341, and Arg413.

Belongs to the ClpX chaperone family. HslU subfamily. As to quaternary structure, a double ring-shaped homohexamer of HslV is capped on each side by a ring-shaped HslU homohexamer. The assembly of the HslU/HslV complex is dependent on binding of ATP.

It localises to the cytoplasm. In terms of biological role, ATPase subunit of a proteasome-like degradation complex; this subunit has chaperone activity. The binding of ATP and its subsequent hydrolysis by HslU are essential for unfolding of protein substrates subsequently hydrolyzed by HslV. HslU recognizes the N-terminal part of its protein substrates and unfolds these before they are guided to HslV for hydrolysis. The chain is ATP-dependent protease ATPase subunit HslU from Bacillus cereus (strain ATCC 14579 / DSM 31 / CCUG 7414 / JCM 2152 / NBRC 15305 / NCIMB 9373 / NCTC 2599 / NRRL B-3711).